Reading from the N-terminus, the 283-residue chain is MAPSPTKRRERSEDKPRERGKEKAPAKEGAEKERGRDKIRKRRSNSTGSSSSRSSSSSSSSSGSSSGSSSGSSSSSGSSRSGSSSSSRSSSSSGSSGSPSPSRRRHDNRRRSRSKSKSQKRTDEKERKRRSPSPKPTKLYLGRLTRNVTKDHIQEIFATYGKIKMIDMPSDRLHPNVSKGYAYVEYESPEDAQKALKHMDGGQIDGQEITATAILAQRIRPAPRRLSPPRRMPPPPPMWRRTPPRMRRRSRSPRRRSPVRRRSRSRSPGRRRHRSRSSSNSSR.

Disordered regions lie at residues 1–141 and 217–283; these read MAPS…KLYL and QRIR…NSSR. A compositionally biased stretch (basic and acidic residues) spans 10–36; that stretch reads ERSEDKPRERGKEKAPAKEGAEKERGR. Residues 45 to 101 are compositionally biased toward low complexity; it reads NSTGSSSSRSSSSSSSSSGSSSGSSSGSSSSSGSSRSGSSSSSRSSSSSGSSGSPSP. The span at 102-119 shows a compositional bias: basic residues; sequence SRRRHDNRRRSRSKSKSQ. An RRM domain is found at 137 to 216; the sequence is TKLYLGRLTR…QEITATAILA (80 aa). A compositionally biased stretch (basic residues) spans 242–276; that stretch reads TPPRMRRRSRSPRRRSPVRRRSRSRSPGRRRHRSR.

The protein belongs to the splicing factor SR family. As to quaternary structure, component of the active spliceosome.

It localises to the nucleus. The protein resides in the nucleus speckle. The protein localises to the cytoplasm. In terms of biological role, component of a splicing-dependent multiprotein exon junction complex (EJC) deposited at splice junction on mRNAs. The EJC is a dynamic structure consisting of a few core proteins and several more peripheral nuclear and cytoplasmic associated factors that join the complex only transiently either during EJC assembly or during subsequent mRNA metabolism. Putative component of the spliceosome which enhances the formation of the ATP-dependent A complex of the spliceosome. May participate in mRNA 3'-end cleavage. Also mediates increase of mRNA abundance and translational efficiency. The sequence is that of RNA-binding protein with serine-rich domain 1 (rnps1) from Danio rerio (Zebrafish).